The sequence spans 315 residues: MVKLLLKDLGEKMILEGAIIYSNLLVLLALGLTLTYITTNVPNFAQGSYAIVGSYVALTLLKLFGICPYLSLPVLFVVGAIVGLITYLALKPLIKRNASVEILMIATLAIDLILLGVIGAYSEILSQIVGSTQAKFVFANLDFSLFGFKGILFVSTFVVILLLIGLYLLLYKTKFGIALRASMENPSLAQTMGIDVEKTRLFSWILSGALAGVAGGLLPFMQEIVPATGDLIIISIFAASIVGGLRHISGALIGGYIIGISESLITYYLASAFGTGFLVYGKVISLIIMIATLLIAPYGITGVDWKKLKRLLSTS.

A run of 9 helical transmembrane segments spans residues 14-34 (ILEG…GLTL), 49-69 (YAIV…ICPY), 70-90 (LSLP…YLAL), 100-120 (VEIL…VIGA), 150-170 (GILF…YLLL), 201-221 (LFSW…LPFM), 224-244 (IVPA…IVGG), 250-270 (GALI…YYLA), and 283-303 (VISL…ITGV).

This sequence belongs to the binding-protein-dependent transport system permease family. LivHM subfamily.

Its subcellular location is the cell membrane. Functionally, part of the binding-protein-dependent transport system for branched-chain amino acids. Probably responsible for the translocation of the substrates across the membrane. This is Probable branched-chain amino acid transport permease protein LivH (livH) from Methanocaldococcus jannaschii (strain ATCC 43067 / DSM 2661 / JAL-1 / JCM 10045 / NBRC 100440) (Methanococcus jannaschii).